A 638-amino-acid chain; its full sequence is Phosphomethylpyrimidine synthase (638 aa).

Residues Asn233, Met262, Tyr291, His327, 347 to 349 (SRG), 388 to 391 (DGLR), and Glu427 each bind substrate. Position 431 (His431) interacts with Zn(2+). Tyr454 is a substrate binding site. His495 serves as a coordination point for Zn(2+). Residues Cys575, Cys578, and Cys583 each contribute to the [4Fe-4S] cluster site.

This sequence belongs to the ThiC family. As to quaternary structure, homodimer. It depends on [4Fe-4S] cluster as a cofactor.

It carries out the reaction 5-amino-1-(5-phospho-beta-D-ribosyl)imidazole + S-adenosyl-L-methionine = 4-amino-2-methyl-5-(phosphooxymethyl)pyrimidine + CO + 5'-deoxyadenosine + formate + L-methionine + 3 H(+). Its pathway is cofactor biosynthesis; thiamine diphosphate biosynthesis. Functionally, catalyzes the synthesis of the hydroxymethylpyrimidine phosphate (HMP-P) moiety of thiamine from aminoimidazole ribotide (AIR) in a radical S-adenosyl-L-methionine (SAM)-dependent reaction. This chain is Phosphomethylpyrimidine synthase, found in Saccharophagus degradans (strain 2-40 / ATCC 43961 / DSM 17024).